Here is a 60-residue protein sequence, read N- to C-terminus: Large ribosomal subunit protein bL33 (60 aa).

It belongs to the bacterial ribosomal protein bL33 family.

The protein is Large ribosomal subunit protein bL33 of Pelodictyon phaeoclathratiforme (strain DSM 5477 / BU-1).